The primary structure comprises 192 residues: Ion-translocating oxidoreductase complex subunit B (192 aa).

The interval 1–26 is hydrophobic; it reads MNAIWIAVVAVSLLGLAFGAILGYAS. Positions 32–91 constitute a 4Fe-4S domain; the sequence is EDDPVVEKIDEILPQSQCGQCGYPGCRPYAEAIGSQGEKINRCAPGGEAVMLKIATLLNV. [4Fe-4S] cluster contacts are provided by cysteine 49, cysteine 52, cysteine 57, cysteine 74, cysteine 117, cysteine 120, cysteine 123, cysteine 127, cysteine 147, cysteine 150, cysteine 153, and cysteine 157. 4Fe-4S ferredoxin-type domains are found at residues 108–137 and 138–167; these read MLAV…GATR and AMHT…LRPV.

It belongs to the 4Fe4S bacterial-type ferredoxin family. RnfB subfamily. As to quaternary structure, the complex is composed of six subunits: RnfA, RnfB, RnfC, RnfD, RnfE and RnfG. [4Fe-4S] cluster serves as cofactor.

The protein resides in the cell inner membrane. Functionally, part of a membrane-bound complex that couples electron transfer with translocation of ions across the membrane. This Citrobacter koseri (strain ATCC BAA-895 / CDC 4225-83 / SGSC4696) protein is Ion-translocating oxidoreductase complex subunit B.